Reading from the N-terminus, the 507-residue chain is Phosphoprotein (507 aa).

The disordered stretch occupies residues 56–79 (DHQDISKPCFPAAGPGKSSMSRCH). Phosphoserine occurs at positions 86 and 151. Acidic residues predominate over residues 137–160 (DGVEVWGGDEESENSDVDSGEPDP). Residues 137–307 (DGVEVWGGDE…QSNIEPEDDY (171 aa)) form a disordered region. Composition is skewed to basic and acidic residues over residues 189–199 (EIQKLLEDQSR) and 222–233 (TASEKPIKKGTD). 2 stretches are compositionally biased toward low complexity: residues 236 to 252 (STSSGTMAESSSTGGAT) and 266 to 278 (NASAENALASASN). Positions 279–301 (VSPTQGSKTESGTTTSRISQSNI) are enriched in polar residues. The segment at 304–376 (EDDYDDELFS…LSSFMIAIPG (73 aa)) is multimerization. The interaction with the nucleocapsid (N-RNA) stretch occupies residues 459-507 (ASRSVIRSIIKSSHLGEDRKDYLMSLLNDIQGSKDLAQFHQMLVKILKN).

This sequence belongs to the morbillivirus P protein family. As to quaternary structure, homotetramer. Interacts (via multimerization domain) with polymerase L; this interaction forms the polymerase L-P complex. Interacts (via N-terminus) with N0 (via Ncore); this interaction allows P to chaperon N0 to avoid N polymerization before encapsidation. Interacts (via C-terminus) with N-RNA template; this interaction positions the polymerase on the template for both transcription and replication. Post-translationally, phosphorylation on serines by host CK2 is necessary for the formation of viral factories.

Essential cofactor of the RNA polymerase L that plays a central role in the transcription and replication by forming the polymerase complex with RNA polymerase L and recruiting L to the genomic N-RNA template for RNA synthesis. Also plays a central role in the encapsidation of nascent RNA chains by forming the encapsidation complex with the nucleocapsid protein N (N-P complex). Acts as a chaperone for newly synthesized free N protein, so-called N0, allowing encapsidation of nascent RNA chains during replication. The nucleoprotein protein N prevents excessive phosphorylation of P, which leads to down-regulation of viral transcription/ replication. Participates, together with N, in the formation of viral factories (viroplasms), which are large inclusions in the host cytoplasm where replication takes place. The polypeptide is Phosphoprotein (P/V) (Bos indicus (Zebu)).